The following is a 624-amino-acid chain: 1-deoxy-D-xylulose-5-phosphate synthase (624 aa).

Thiamine diphosphate contacts are provided by residues histidine 74 and 115–117 (GHS). Aspartate 146 contributes to the Mg(2+) binding site. Residues 147–148 (GA), asparagine 175, tyrosine 286, and glutamate 367 each bind thiamine diphosphate. Asparagine 175 lines the Mg(2+) pocket.

This sequence belongs to the transketolase family. DXPS subfamily. As to quaternary structure, homodimer. Requires Mg(2+) as cofactor. It depends on thiamine diphosphate as a cofactor.

The enzyme catalyses D-glyceraldehyde 3-phosphate + pyruvate + H(+) = 1-deoxy-D-xylulose 5-phosphate + CO2. The protein operates within metabolic intermediate biosynthesis; 1-deoxy-D-xylulose 5-phosphate biosynthesis; 1-deoxy-D-xylulose 5-phosphate from D-glyceraldehyde 3-phosphate and pyruvate: step 1/1. Catalyzes the acyloin condensation reaction between C atoms 2 and 3 of pyruvate and glyceraldehyde 3-phosphate to yield 1-deoxy-D-xylulose-5-phosphate (DXP). The polypeptide is 1-deoxy-D-xylulose-5-phosphate synthase (Alkaliphilus oremlandii (strain OhILAs) (Clostridium oremlandii (strain OhILAs))).